The following is a 366-amino-acid chain: UDP-N-acetylenolpyruvoylglucosamine reductase (366 aa).

One can recognise an FAD-binding PCMH-type domain in the interval 27 to 197; sequence LGGPAAGFVV…LRVRFLLRDG (171 aa). Arginine 175 is an active-site residue. Serine 252 (proton donor) is an active-site residue. Residue glutamate 358 is part of the active site.

The protein belongs to the MurB family. The cofactor is FAD.

It localises to the cytoplasm. It catalyses the reaction UDP-N-acetyl-alpha-D-muramate + NADP(+) = UDP-N-acetyl-3-O-(1-carboxyvinyl)-alpha-D-glucosamine + NADPH + H(+). It functions in the pathway cell wall biogenesis; peptidoglycan biosynthesis. In terms of biological role, cell wall formation. The chain is UDP-N-acetylenolpyruvoylglucosamine reductase from Saccharopolyspora erythraea (strain ATCC 11635 / DSM 40517 / JCM 4748 / NBRC 13426 / NCIMB 8594 / NRRL 2338).